The chain runs to 96 residues: UPF0235 protein YggU (96 aa).

Belongs to the UPF0235 family.

This Escherichia coli O127:H6 (strain E2348/69 / EPEC) protein is UPF0235 protein YggU.